An 81-amino-acid chain; its full sequence is MNNKSTNNLQDIFLNSARKNKIPVAIHLTNGFQMRGSVKGFDSFTVILESDGKQMMIYKHAVSTITPLRPILFNQPQQDEE.

The 61-residue stretch at 11–71 (DIFLNSARKN…VSTITPLRPI (61 aa)) folds into the Sm domain.

It belongs to the Hfq family. As to quaternary structure, homohexamer.

In terms of biological role, RNA chaperone that binds small regulatory RNA (sRNAs) and mRNAs to facilitate mRNA translational regulation in response to envelope stress, environmental stress and changes in metabolite concentrations. Also binds with high specificity to tRNAs. This chain is RNA-binding protein Hfq, found in Clostridium acetobutylicum (strain ATCC 824 / DSM 792 / JCM 1419 / IAM 19013 / LMG 5710 / NBRC 13948 / NRRL B-527 / VKM B-1787 / 2291 / W).